The following is a 139-amino-acid chain: Hydrogenase maturation factor HypA (139 aa).

M1 and H2 together coordinate Ni(2+). Zn(2+) contacts are provided by C73 and C76. H98 provides a ligand contact to Ni(2+). Positions 110 and 113 each coordinate Zn(2+).

It belongs to the HypA/HybF family. Monomer and homodimer. Could also form hexamers. Forms a complex with HypB.

Functionally, involved in the maturation of [NiFe] hydrogenases. Required for nickel insertion into the metal center of the hydrogenase. The sequence is that of Hydrogenase maturation factor HypA from Thermococcus kodakarensis (strain ATCC BAA-918 / JCM 12380 / KOD1) (Pyrococcus kodakaraensis (strain KOD1)).